A 514-amino-acid chain; its full sequence is Putative GTP-binding protein 6 (514 aa).

The disordered stretch occupies residues 48 to 71 (WAGGGPVRGGGEEDPREDEEEEED). Residues 59–71 (EEDPREDEEEEED) are compositionally biased toward acidic residues. The Hflx-type G domain occupies 285-449 (PVVSVVGYTN…ALEASVLRAT (165 aa)). Mg(2+) is bound by residues Thr298 and Thr319.

The protein belongs to the TRAFAC class OBG-HflX-like GTPase superfamily. HflX GTPase family. The cofactor is Mg(2+).

This Mus musculus (Mouse) protein is Putative GTP-binding protein 6 (Gtpbp6).